The following is a 148-amino-acid chain: Ribosomal RNA large subunit methyltransferase H 2 (148 aa).

S-adenosyl-L-methionine contacts are provided by residues Leu-74, Gly-106, and 125–130; that span reads FSKMTF.

Belongs to the RNA methyltransferase RlmH family. In terms of assembly, homodimer.

The protein localises to the cytoplasm. The catalysed reaction is pseudouridine(1915) in 23S rRNA + S-adenosyl-L-methionine = N(3)-methylpseudouridine(1915) in 23S rRNA + S-adenosyl-L-homocysteine + H(+). Its function is as follows. Specifically methylates the pseudouridine at position 1915 (m3Psi1915) in 23S rRNA. The protein is Ribosomal RNA large subunit methyltransferase H 2 of Caldanaerobacter subterraneus subsp. tengcongensis (strain DSM 15242 / JCM 11007 / NBRC 100824 / MB4) (Thermoanaerobacter tengcongensis).